Here is a 257-residue protein sequence, read N- to C-terminus: Zinc finger protein 8 (257 aa).

Disordered stretches follow at residues 48-92 (GDNS…NNNN), 108-128 (QALG…KRGS), and 214-238 (GVYS…PNNW). Residues 50–65 (NSDNLSAEPSDHQTTT) show a composition bias toward polar residues. Basic and acidic residues predominate over residues 66–92 (KNDESSENIKDKDKEKDKDKDKDNNNN). The C2H2-type zinc-finger motif lies at 95 to 117 (FECHYCFRNFPTSQALGGHQNAH). A compositionally biased stretch (basic residues) spans 115-126 (NAHKRERQHAKR).

As to expression, expressed in developing cauline leaves.

It localises to the nucleus. Probable transcription factor required for the initiation of inflorescence trichomes in response to gibberellin and cytokinin. Is not involved in the regulation of trichome branching. Is functionally equivalent to GIS2. Acts as a negative regulator of abscisic acid (ABA) signaling during germination and early seedling development. In Arabidopsis thaliana (Mouse-ear cress), this protein is Zinc finger protein 8.